The primary structure comprises 146 residues: Hemoglobin subunit beta-0 (146 aa).

A Globin domain is found at 2-146 (EWTDFERATI…VVSSLGRQYH (145 aa)). Residues His-63 and His-92 each contribute to the heme b site.

It belongs to the globin family. Heterotetramer of two alpha chains and two beta chains. As to expression, red blood cells.

Functionally, involved in oxygen transport from gills to the various peripheral tissues. This Pagothenia borchgrevinki (Bald rockcod) protein is Hemoglobin subunit beta-0 (hbb0).